Consider the following 450-residue polypeptide: WD repeat-containing protein ATCSA-1 (450 aa).

WD repeat units lie at residues 41-81 (PHRG…DYEA), 101-141 (GHKY…AVVD), 148-185 (VYRT…FSHT), and 188-228 (GHRD…CFRV). Residues 269–298 (LQSKQTGSQSVKGSSSAKASVEKSRQKRIH) are disordered. Low complexity predominate over residues 271 to 287 (SKQTGSQSVKGSSSAKA). WD repeat units lie at residues 310 to 349 (AHYG…NTLV) and 397 to 436 (GHYE…EDEM).

As to quaternary structure, interacts with DDB1A. Expressed in roots, leaves, stems, flowers and siliques.

The protein localises to the nucleus. Its function is as follows. Involved in UV-B tolerance and genome integrity. In association with DDB2, is necessary for repair of UV-B-induced DNA lesions. The sequence is that of WD repeat-containing protein ATCSA-1 from Arabidopsis thaliana (Mouse-ear cress).